Reading from the N-terminus, the 491-residue chain is Aspartyl/glutamyl-tRNA(Asn/Gln) amidotransferase subunit B (491 aa).

This sequence belongs to the GatB/GatE family. GatB subfamily. In terms of assembly, heterotrimer of A, B and C subunits.

It catalyses the reaction L-glutamyl-tRNA(Gln) + L-glutamine + ATP + H2O = L-glutaminyl-tRNA(Gln) + L-glutamate + ADP + phosphate + H(+). The catalysed reaction is L-aspartyl-tRNA(Asn) + L-glutamine + ATP + H2O = L-asparaginyl-tRNA(Asn) + L-glutamate + ADP + phosphate + 2 H(+). Functionally, allows the formation of correctly charged Asn-tRNA(Asn) or Gln-tRNA(Gln) through the transamidation of misacylated Asp-tRNA(Asn) or Glu-tRNA(Gln) in organisms which lack either or both of asparaginyl-tRNA or glutaminyl-tRNA synthetases. The reaction takes place in the presence of glutamine and ATP through an activated phospho-Asp-tRNA(Asn) or phospho-Glu-tRNA(Gln). The polypeptide is Aspartyl/glutamyl-tRNA(Asn/Gln) amidotransferase subunit B (Burkholderia ambifaria (strain ATCC BAA-244 / DSM 16087 / CCUG 44356 / LMG 19182 / AMMD) (Burkholderia cepacia (strain AMMD))).